The primary structure comprises 260 residues: Flagellar basal-body rod protein FlgG (260 aa).

The protein belongs to the flagella basal body rod proteins family. The basal body constitutes a major portion of the flagellar organelle and consists of four rings (L,P,S, and M) mounted on a central rod. The rod consists of about 26 subunits of FlgG in the distal portion, and FlgB, FlgC and FlgF are thought to build up the proximal portion of the rod with about 6 subunits each.

The protein resides in the bacterial flagellum basal body. This is Flagellar basal-body rod protein FlgG (flgG) from Escherichia coli O157:H7.